The chain runs to 317 residues: Flagellar hook-associated protein 3 (317 aa).

It belongs to the bacterial flagellin family.

Its subcellular location is the secreted. It localises to the bacterial flagellum. The polypeptide is Flagellar hook-associated protein 3 (flgL) (Salmonella typhimurium (strain LT2 / SGSC1412 / ATCC 700720)).